A 124-amino-acid chain; its full sequence is Small ribosomal subunit protein uS12 (124 aa).

The interval 1–24 (MPTINQLVRRPRKPSVSANKAPAL) is disordered. Asp90 bears the 3-methylthioaspartic acid mark.

This sequence belongs to the universal ribosomal protein uS12 family. As to quaternary structure, part of the 30S ribosomal subunit. Contacts proteins S8 and S17. May interact with IF1 in the 30S initiation complex.

Functionally, with S4 and S5 plays an important role in translational accuracy. Its function is as follows. Interacts with and stabilizes bases of the 16S rRNA that are involved in tRNA selection in the A site and with the mRNA backbone. Located at the interface of the 30S and 50S subunits, it traverses the body of the 30S subunit contacting proteins on the other side and probably holding the rRNA structure together. The combined cluster of proteins S8, S12 and S17 appears to hold together the shoulder and platform of the 30S subunit. This chain is Small ribosomal subunit protein uS12, found in Anaplasma phagocytophilum (strain HZ).